Consider the following 103-residue polypeptide: UPF0473 protein LVIS_1220 (103 aa).

The protein belongs to the UPF0473 family.

This is UPF0473 protein LVIS_1220 from Levilactobacillus brevis (strain ATCC 367 / BCRC 12310 / CIP 105137 / JCM 1170 / LMG 11437 / NCIMB 947 / NCTC 947) (Lactobacillus brevis).